The chain runs to 498 residues: Glycerol kinase (498 aa).

Thr-11 lines the ADP pocket. ATP-binding residues include Thr-11, Ser-12, and Ser-13. Thr-11 contacts sn-glycerol 3-phosphate. Residue Arg-15 coordinates ADP. Residues Arg-81, Glu-82, Tyr-133, and Asp-242 each contribute to the sn-glycerol 3-phosphate site. 5 residues coordinate glycerol: Arg-81, Glu-82, Tyr-133, Asp-242, and Gln-243. Positions 264 and 307 each coordinate ADP. Positions 264, 307, 311, and 408 each coordinate ATP. The ADP site is built by Gly-408 and Asn-412.

Belongs to the FGGY kinase family.

The enzyme catalyses glycerol + ATP = sn-glycerol 3-phosphate + ADP + H(+). It participates in polyol metabolism; glycerol degradation via glycerol kinase pathway; sn-glycerol 3-phosphate from glycerol: step 1/1. Its activity is regulated as follows. Inhibited by fructose 1,6-bisphosphate (FBP). Functionally, key enzyme in the regulation of glycerol uptake and metabolism. Catalyzes the phosphorylation of glycerol to yield sn-glycerol 3-phosphate. This chain is Glycerol kinase, found in Ralstonia nicotianae (strain ATCC BAA-1114 / GMI1000) (Ralstonia solanacearum).